Consider the following 720-residue polypeptide: Serrate RNA effector molecule (720 aa).

3 disordered regions span residues 1-192 (MADV…NPQR), 288-335 (LNKS…FTSD), and 361-380 (ENVLQGSETEKSGREKLHSG). Residues 33-47 (SLPQQEQEQDQQQLP) show a composition bias toward low complexity. A compositionally biased stretch (basic and acidic residues) spans 48-76 (LRRERDSRERRDERDIERPPPNRRERDRS). Ser-76, Ser-90, and Ser-92 each carry phosphoserine. Residues 99-115 (DRRHSPPQRRSPPQKRY) are compositionally biased toward basic residues. Composition is skewed to basic and acidic residues over residues 116–126 (RRDDNGYDGRR) and 136–164 (PDRRFGYDHGGGYDREMGGRPGYGDERPH). A compositionally biased stretch (polar residues) spans 288 to 297 (LNKSGRTSEP). The span at 368–378 (ETEKSGREKLH) shows a compositional bias: basic and acidic residues. The C2H2-type zinc-finger motif lies at 498–523 (YGCGAKGCTKLFHAAEFVYKHLKLKH). Disordered regions lie at residues 543–622 (YMND…AFGG) and 666–687 (RDPSGPNPPFEGSGRGGPAPFL). Positions 570–607 (PSMENRLRDDRGGRRERDGRANGNDRNDRSEDQQRGDN) are enriched in basic and acidic residues. The segment covering 608–622 (DGGNPGEVGYDAFGG) has biased composition (gly residues). Ser-689 carries the phosphoserine modification.

Belongs to the ARS2 family. Interacts with HYL1. Interacts with RCF3, RS40 and RS41. In terms of tissue distribution, expressed in shoot meristems and in emerging organ primordia throughout development.

Its subcellular location is the nucleus. The protein resides in the nucleus speckle. Its function is as follows. Acts as a mediator between the cap-binding complex (CBC) and both the pre-mRNA splicing and primary microRNAs (miRNAs) processing machinery. Required for proper processing of primary miRNAs to miRNAs, thereby playing a role in RNA-mediated gene silencing (RNAi) by miRNAs. Does not participate in sense post-transcriptional gene silencing. Acts as a regulator of meristem activity and adaxial leaf fate via the miRNA gene-silencing pathway by regulating the expression of PHB and by limiting the competence of shoot tissue to respond to KNOX expression. Its function is however not limited to miRNA-mediated repression of leaf polarity genes, but rather acts as a general regulator of primary microRNAs processing. Also critical for the accumulation of the trans-acting small interfering RNA (ta-siRNA). Required for pre-mRNA splicing. The sequence is that of Serrate RNA effector molecule (SE) from Arabidopsis thaliana (Mouse-ear cress).